The sequence spans 72 residues: Penaeidin-2b (72 aa).

An N-terminal signal peptide occupies residues 1-21 (MRLVVCLVFLASFALVCQGEA). 3 cysteine pairs are disulfide-bonded: Cys45–Cys59, Cys48–Cys66, and Cys60–Cys67. Lys71 is modified (lysine amide).

It belongs to the penaeidin family.

The protein localises to the cytoplasmic granule. Its function is as follows. Antibacterial and antifungal activity. Presents chitin-binding activity. This is Penaeidin-2b from Penaeus vannamei (Whiteleg shrimp).